We begin with the raw amino-acid sequence, 802 residues long: Chromosome alignment-maintaining phosphoprotein 1 (802 aa).

Residue methionine 1 is modified to N-acetylmethionine. Basic and acidic residues predominate over residues 88 to 105 (SDKWSEQPKEQPSKDTES). The interval 88 to 475 (SDKWSEQPKE…PDLWKSSFIM (388 aa)) is disordered. Phosphoserine is present on serine 108. Over residues 135–148 (QKTSPSLCPESQAS) the composition is skewed to polar residues. A compositionally biased stretch (basic and acidic residues) spans 185–203 (ERVDPPCELPELEKPERGP). A phosphoserine mark is found at serine 204, serine 207, serine 234, serine 237, serine 243, serine 252, serine 254, serine 265, serine 272, serine 276, serine 298, serine 309, serine 334, serine 345, and serine 365. Residues 261–479 (ARTASPEPRK…KSSFIMESQK (219 aa)) form a mediates interaction with MAD2L2 region. Residues 332 to 351 (PMSPGPWKPIPSVSPGPWKP) are compositionally biased toward pro residues. Residues 354–368 (SMSTASWKSSVSSGS) are compositionally biased toward low complexity. A compositionally biased stretch (polar residues) spans 369–378 (WKTPPTSPES). Threonine 371 bears the Phosphothreonine mark. Serine 375, serine 394, serine 405, serine 416, serine 421, serine 425, serine 432, serine 434, and serine 441 each carry phosphoserine. Residues 440–580 (VSPDQRKTSP…EIQLEAVDNA (141 aa)) form a mediates localization to the spindle and the kinetochore and is required for the attachment of spindle microtubules to the kinetochore region. Residue threonine 447 is modified to Phosphothreonine. Residues serine 448, serine 451, and serine 461 each carry the phosphoserine modification. Residue lysine 479 is modified to N6-acetyllysine; alternate. Lysine 479 participates in a covalent cross-link: Glycyl lysine isopeptide (Lys-Gly) (interchain with G-Cter in SUMO2); alternate. 3 positions are modified to phosphoserine: serine 497, serine 502, and serine 532. Lysine 555 is covalently cross-linked (Glycyl lysine isopeptide (Lys-Gly) (interchain with G-Cter in SUMO2)). The interval 581–802 (KCDSLAQEGL…LESPLEEQQI (222 aa)) is mediates localization to the chromosome and the spindle and negatively regulates chromosome alignment. Threonine 593 is modified (phosphothreonine). Lysine 596 participates in a covalent cross-link: Glycyl lysine isopeptide (Lys-Gly) (interchain with G-Cter in SUMO2). Phosphoserine occurs at positions 603, 605, 617, 622, 641, 642, and 643. Positions 603-625 (SPSSKKLKKDSQENSDAELSSSE) are disordered. Lysine 660 is covalently cross-linked (Glycyl lysine isopeptide (Lys-Gly) (interchain with G-Cter in SUMO2)). Serine 665 carries the phosphoserine modification. Lysine 679 is covalently cross-linked (Glycyl lysine isopeptide (Lys-Gly) (interchain with G-Cter in SUMO2)). Position 726 is a phosphoserine (serine 726). The segment at 728–750 (YKCTICGKAFLLESLLKNHVAAH) adopts a C2H2-type zinc-finger fold.

In terms of assembly, interacts with MAD2L2. Interacts with POGZ, CBX1, CBX3 and CBX5. Phosphorylated by CDK1. Mitotic phosphorylation is required for the attachment of spindle microtubules to the kinetochore.

Its subcellular location is the nucleus. It localises to the chromosome. The protein resides in the centromere. The protein localises to the kinetochore. It is found in the cytoplasm. Its subcellular location is the cytoskeleton. It localises to the spindle. Its function is as follows. Required for proper alignment of chromosomes at metaphase and their accurate segregation during mitosis. Involved in the maintenance of spindle microtubules attachment to the kinetochore during sister chromatid biorientation. May recruit CENPE and CENPF to the kinetochore. This Mus musculus (Mouse) protein is Chromosome alignment-maintaining phosphoprotein 1 (Champ1).